The primary structure comprises 186 residues: Nicotinamidase/pyrazinamidase (186 aa).

The active-site Proton acceptor is D8. Fe cation contacts are provided by D49, H51, H57, and H71. The active site involves K96. The active-site Nucleophile is C138.

Belongs to the isochorismatase family. In terms of assembly, monomer. Requires Mn(2+) as cofactor. The cofactor is Fe(2+).

It carries out the reaction nicotinamide + H2O = nicotinate + NH4(+). The catalysed reaction is pyrazinamide + H2O = pyrazine-2-carboxylate + NH4(+). It functions in the pathway cofactor biosynthesis; nicotinate biosynthesis; nicotinate from nicotinamide: step 1/1. Its activity is regulated as follows. Is inhibited by Cu(2+), Zn(2+) and Fe(3+). Its function is as follows. Catalyzes the deamidation of nicotinamide (NAM) into nicotinate. Likely functions in the cyclical salvage pathway for production of NAD from nicotinamide. Is involved in the activation of the first-line antituberculous drug pyrazinamide (PZA) by converting it into the active form, pyrazinoic acid. The sequence is that of Nicotinamidase/pyrazinamidase from Mycobacterium tuberculosis (strain ATCC 25618 / H37Rv).